The sequence spans 209 residues: Kynurenine formamidase (209 aa).

Trp20 contributes to the substrate binding site. 3 residues coordinate Zn(2+): His50, His54, and Asp56. His60 (proton donor/acceptor) is an active-site residue. 2 residues coordinate Zn(2+): His161 and Glu173.

It belongs to the Cyclase 1 superfamily. KynB family. As to quaternary structure, homodimer. Zn(2+) is required as a cofactor.

It carries out the reaction N-formyl-L-kynurenine + H2O = L-kynurenine + formate + H(+). Its pathway is amino-acid degradation; L-tryptophan degradation via kynurenine pathway; L-kynurenine from L-tryptophan: step 2/2. Functionally, catalyzes the hydrolysis of N-formyl-L-kynurenine to L-kynurenine, the second step in the kynurenine pathway of tryptophan degradation. This is Kynurenine formamidase from Bacillus cereus (strain ZK / E33L).